A 438-amino-acid chain; its full sequence is Aspartate--tRNA(Asp/Asn) ligase (438 aa).

Glutamate 176 is an L-aspartate binding site. The interval 198 to 201 (QLYK) is aspartate. L-aspartate is bound at residue arginine 220. ATP is bound by residues 220–222 (RAE), 228–230 (RHL), and glutamate 361. Glutamate 361 and serine 364 together coordinate Mg(2+). L-aspartate contacts are provided by serine 364 and arginine 368. An ATP-binding site is contributed by 409–412 (GADR).

It belongs to the class-II aminoacyl-tRNA synthetase family. Type 2 subfamily. Homodimer. Mg(2+) is required as a cofactor.

It localises to the cytoplasm. It carries out the reaction tRNA(Asx) + L-aspartate + ATP = L-aspartyl-tRNA(Asx) + AMP + diphosphate. Aspartyl-tRNA synthetase with relaxed tRNA specificity since it is able to aspartylate not only its cognate tRNA(Asp) but also tRNA(Asn). Reaction proceeds in two steps: L-aspartate is first activated by ATP to form Asp-AMP and then transferred to the acceptor end of tRNA(Asp/Asn). The sequence is that of Aspartate--tRNA(Asp/Asn) ligase from Methanococcus maripaludis (strain C5 / ATCC BAA-1333).